The chain runs to 39 residues: Protein YkiC (39 aa).

The chain crosses the membrane as a helical span at residues 13-35; sequence LLSAKLCNCTQAIMTHIIASFLA.

The protein localises to the cell inner membrane. The chain is Protein YkiC from Escherichia coli (strain K12).